Here is a 316-residue protein sequence, read N- to C-terminus: Protein YIPF2 (316 aa).

An N-acetylalanine modification is found at Ala2. Over 2–124 (ASADELTFHE…LRNRPDLYGP (123 aa)) the chain is Cytoplasmic. Positions 16 to 37 (TNLLADTPDAATTSRSDQLTPQ) are disordered. Residues 25–36 (AATTSRSDQLTP) show a composition bias toward polar residues. A helical membrane pass occupies residues 125–145 (FWICATLAFVLAVTGNLTLVL). Residues 146-163 (AQRRDPSIHYSPQFHKVT) are Lumenal-facing. A helical transmembrane segment spans residues 164-184 (VAGISIYCYAWLVPLALWGFL). Topologically, residues 185–196 (RWRKGVQERMGP) are cytoplasmic. A helical membrane pass occupies residues 197–219 (YTFLETVCIYGYSLFVFIPMVVL). Topologically, residues 220–231 (WLIPVPWLQWLF) are lumenal. Residues 232–252 (GALALGLSAAGLVFTLWPVVR) form a helical membrane-spanning segment. Topologically, residues 253 to 256 (EDTR) are cytoplasmic. The chain crosses the membrane as a helical span at residues 257-277 (LVATVLLSVVVLLHALLAMGC). At 278–316 (KLYFFQSLPPENVAPPPQITSLPSNIALSPTLPQSLAPS) the chain is on the lumenal side.

Belongs to the YIP1 family. As to quaternary structure, interacts with YIPF6; this interaction may stabilize YIPF2. May also form a ternary complex with YIPF1 and YIPF6.

Its subcellular location is the golgi apparatus. The protein resides in the cis-Golgi network membrane. It localises to the trans-Golgi network membrane. The protein localises to the late endosome membrane. The polypeptide is Protein YIPF2 (YIPF2) (Homo sapiens (Human)).